The primary structure comprises 474 residues: Histone H2B.v2 (474 aa).

Disordered regions lie at residues 99–123, 276–295, and 328–394; these read FNNG…QNEL, TTFT…ISGD, and FNDN…VNNN. 3 stretches are compositionally biased toward low complexity: residues 100 to 110, 276 to 286, and 329 to 368; these read NNGGNNNNNNE, TTFTQQEQQEQ, and NDNN…NNKN.

It belongs to the histone H2B family.

In Dictyostelium discoideum (Social amoeba), this protein is Histone H2B.v2 (H2Bv2).